A 421-amino-acid chain; its full sequence is 5-methylthioadenosine/S-adenosylhomocysteine deaminase (421 aa).

Positions 60 and 62 each coordinate Zn(2+). Residues Glu-89 and His-181 each contribute to the substrate site. His-208 lines the Zn(2+) pocket. The substrate site is built by Glu-211 and Asp-296. Asp-296 is a Zn(2+) binding site.

The protein belongs to the metallo-dependent hydrolases superfamily. MTA/SAH deaminase family. Requires Zn(2+) as cofactor.

The catalysed reaction is S-adenosyl-L-homocysteine + H2O + H(+) = S-inosyl-L-homocysteine + NH4(+). It carries out the reaction S-methyl-5'-thioadenosine + H2O + H(+) = S-methyl-5'-thioinosine + NH4(+). Functionally, catalyzes the deamination of 5-methylthioadenosine and S-adenosyl-L-homocysteine into 5-methylthioinosine and S-inosyl-L-homocysteine, respectively. Is also able to deaminate adenosine. The sequence is that of 5-methylthioadenosine/S-adenosylhomocysteine deaminase from Pyrococcus horikoshii (strain ATCC 700860 / DSM 12428 / JCM 9974 / NBRC 100139 / OT-3).